Reading from the N-terminus, the 191-residue chain is Calcium-activated potassium channel subunit beta-1 (191 aa).

The Cytoplasmic segment spans residues 1 to 18 (MVKKLVMAQKRGETRALC). The helical transmembrane segment at 19 to 39 (LGVTMVVCAVITYYILVTTVL) threads the bilayer. Residues 40 to 157 (PLYQKSVWTQ…FQRLYGPQAL (118 aa)) are Extracellular-facing. N-linked (GlcNAc...) asparagine glycans are attached at residues Asn-80 and Asn-142. The chain crosses the membrane as a helical span at residues 158-178 (LFSLFWPTFLLTGGLLIIAMV). Over 179–191 (KSNQYLSILAAQK) the chain is Cytoplasmic.

Belongs to the KCNMB (TC 8.A.14.1) family. KCNMB1 subfamily. As to quaternary structure, interacts with KCNMA1 tetramer. There are probably 4 molecules of KCMNB1 per KCNMA1 tetramer. Post-translationally, N-glycosylated. Abundantly expressed in smooth muscle. Low levels of expression in most other tissues. Within the brain, relatively high levels found in hippocampus and corpus callosum.

Its subcellular location is the membrane. In terms of biological role, regulatory subunit of the calcium activated potassium KCNMA1 (maxiK) channel. Modulates the calcium sensitivity and gating kinetics of KCNMA1, thereby contributing to KCNMA1 channel diversity. Increases the apparent Ca(2+)/voltage sensitivity of the KCNMA1 channel. It also modifies KCNMA1 channel kinetics and alters its pharmacological properties. It slows down the activation and the deactivation kinetics of the channel. Acts as a negative regulator of smooth muscle contraction by enhancing the calcium sensitivity to KCNMA1. Its presence is also a requirement for internal binding of the KCNMA1 channel opener dehydrosoyasaponin I (DHS-1) triterpene glycoside and for external binding of the agonist hormone 17-beta-estradiol (E2). Increases the binding activity of charybdotoxin (CTX) toxin to KCNMA1 peptide blocker by increasing the CTX association rate and decreasing the dissociation rate. This chain is Calcium-activated potassium channel subunit beta-1 (KCNMB1), found in Homo sapiens (Human).